We begin with the raw amino-acid sequence, 217 residues long: Small ribosomal subunit protein uS3 (217 aa).

Residues 38-106 (IRKFIDNELK…KVHINVIEIK (69 aa)) form the KH type-2 domain.

Belongs to the universal ribosomal protein uS3 family. As to quaternary structure, part of the 30S ribosomal subunit. Forms a tight complex with proteins S10 and S14.

Functionally, binds the lower part of the 30S subunit head. Binds mRNA in the 70S ribosome, positioning it for translation. This chain is Small ribosomal subunit protein uS3, found in Staphylococcus haemolyticus (strain JCSC1435).